Reading from the N-terminus, the 189-residue chain is Threonylcarbamoyl-AMP synthase (189 aa).

The YrdC-like domain occupies 7–189 (NFTVKGLTEQ…DAITGKIIRK (183 aa)).

The protein belongs to the SUA5 family. TsaC subfamily.

It localises to the cytoplasm. It catalyses the reaction L-threonine + hydrogencarbonate + ATP = L-threonylcarbamoyladenylate + diphosphate + H2O. In terms of biological role, required for the formation of a threonylcarbamoyl group on adenosine at position 37 (t(6)A37) in tRNAs that read codons beginning with adenine. Catalyzes the conversion of L-threonine, HCO(3)(-)/CO(2) and ATP to give threonylcarbamoyl-AMP (TC-AMP) as the acyladenylate intermediate, with the release of diphosphate. This Blochmanniella floridana protein is Threonylcarbamoyl-AMP synthase.